The sequence spans 234 residues: UPF0173 metal-dependent hydrolase RHECIAT_CH0001941 (234 aa).

The protein belongs to the UPF0173 family.

The sequence is that of UPF0173 metal-dependent hydrolase RHECIAT_CH0001941 from Rhizobium etli (strain CIAT 652).